Reading from the N-terminus, the 189-residue chain is Lutzicidin (189 aa).

An N-terminal signal peptide occupies residues 1-22 (MQGFFWKTLLVVALCGTSSSLA). Positions 23–155 (HRPLSYGEAL…DEEKDRPKRV (133 aa)) are excised as a propeptide. Disulfide bonds link C79-C90 and C101-C118. A compositionally biased stretch (acidic residues) spans 125–148 (EEEEEDEEEQKAEVEKDEEKEDEE). The disordered stretch occupies residues 125–152 (EEEEEDEEEQKAEVEKDEEKEDEEKDRP).

It belongs to the cathelicidin family. In terms of tissue distribution, expressed by the venom gland.

The protein resides in the secreted. The protein localises to the target cell membrane. Functionally, potent antimicrobial peptide against Gram-negative and Gram-positive bacteria. Adopts an amphipathic alpha helical conformation, that may allow to partition into the target membrane. Low hemolytic activities have been observed on mammalian cells. In Bothrops lutzi (Sertao lancehead), this protein is Lutzicidin.